The following is a 679-amino-acid chain: Methionine--tRNA ligase (679 aa).

The 'HIGH' region motif lies at 15 to 25 (PYANGPVHIGH). Positions 147, 150, 160, and 163 each coordinate Zn(2+). Positions 332–336 (KISTS) match the 'KMSKS' region motif. T335 contributes to the ATP binding site. A tRNA-binding domain is found at 578 to 679 (DFMKLDIRVG…KEVKPGSEVK (102 aa)).

Belongs to the class-I aminoacyl-tRNA synthetase family. MetG type 1 subfamily. As to quaternary structure, homodimer. It depends on Zn(2+) as a cofactor.

Its subcellular location is the cytoplasm. It catalyses the reaction tRNA(Met) + L-methionine + ATP = L-methionyl-tRNA(Met) + AMP + diphosphate. Is required not only for elongation of protein synthesis but also for the initiation of all mRNA translation through initiator tRNA(fMet) aminoacylation. This Parabacteroides distasonis (strain ATCC 8503 / DSM 20701 / CIP 104284 / JCM 5825 / NCTC 11152) protein is Methionine--tRNA ligase.